The primary structure comprises 219 residues: Cytidylate kinase (219 aa).

An ATP-binding site is contributed by 21–29; sequence GPAASGKGT.

The protein belongs to the cytidylate kinase family. Type 1 subfamily.

The protein resides in the cytoplasm. It catalyses the reaction CMP + ATP = CDP + ADP. The enzyme catalyses dCMP + ATP = dCDP + ADP. The chain is Cytidylate kinase from Rickettsia rickettsii (strain Iowa).